The chain runs to 664 residues: MPQENNTFYITTPIYYPSGKLHIGHAYTTVAGDAMARYKRLKGFDVRYLTGTDEHGQKIQQKAEQENITPQEYVDRAAADIQKLWKQLEISNDDFIRTTEKRHKVVIEKVFQKLLDNGDIYLDEYEGWYSIPDETFYTETQLVDIERNEKGEVIGGKSPDSGHPVELIKEESYFFRMGKYADRLLKYYEENPTFIQPESRKNEMINNFIKPGLEDLAVSRTTFDWGVKVPENPKHVVYVWIDALFNYLTALGYDTENDELYQKYWPADVHLVGKEIVRFHTIYWPIMLMALDLPLPKQVFAHGWLLMKDGKMSKSKGNVVDPVTLIERYGLDELRYYLLREVPFGSDGVFTPEGFVERINYDLANDLGNLLNRTVAMINKYFDGQIGSYKGAVTEFDHTLTSVAEETVKAYEKAMENMEFSVALSTLWQLISRTNKYIDETAPWVLAKDPAKEEELRSVMYHLAESLRISAVLLQPFLTKTPEKMFEQLGITDESLKAWDSITAFGQLKDTKVQKGEPLFPRLEAEEEIAYIKGKMQGSAPAKEETKEEEPQEVDRLPEITIDQFMDVELRVAEVIEAEPVKKADRLLKLQLDLGFEKRQVVSGIAKHYTPEELVGKKLVCVTNLKPVKLRGELSQGMILAGEADGVLKVVSIDQSLPKGTRIK.

Positions 15-25 match the 'HIGH' region motif; that stretch reads YYPSGKLHIGH. Positions 311-315 match the 'KMSKS' region motif; the sequence is KMSKS. Lysine 314 is a binding site for ATP. Positions 536-556 are disordered; sequence MQGSAPAKEETKEEEPQEVDR. Positions 570–662 constitute a tRNA-binding domain; it reads LRVAEVIEAE…IDQSLPKGTR (93 aa).

Belongs to the class-I aminoacyl-tRNA synthetase family. MetG type 2B subfamily. As to quaternary structure, homodimer.

Its subcellular location is the cytoplasm. It carries out the reaction tRNA(Met) + L-methionine + ATP = L-methionyl-tRNA(Met) + AMP + diphosphate. Its function is as follows. Is required not only for elongation of protein synthesis but also for the initiation of all mRNA translation through initiator tRNA(fMet) aminoacylation. The polypeptide is Methionine--tRNA ligase (metG) (Bacillus subtilis (strain 168)).